Here is a 237-residue protein sequence, read N- to C-terminus: Octopine transport system permease protein OccQ (237 aa).

Positions 22 to 222 (TGMTVAVASS…LITFISGQAF (201 aa)) constitute an ABC transmembrane type-1 domain. 4 helical membrane-spanning segments follow: residues 24–44 (MTVAVASSAFTIGLVFGCLGA), 72–92 (LVIYLFYFGSSSLISGVGSLF), 96–116 (GFVSAPAFLTGALAIGLVSAA), and 201–221 (FSFYLTAAALYLLITFISGQA).

It belongs to the binding-protein-dependent transport system permease family. HisMQ subfamily.

It is found in the cell inner membrane. Functionally, component of the octopine active transport system probably consisting of four subunits: Q, M, P and T. In Rhizobium meliloti (Ensifer meliloti), this protein is Octopine transport system permease protein OccQ (occQ).